The following is a 767-amino-acid chain: Slo-interacting protein 1 (767 aa).

The 79-residue stretch at 202–280 folds into the PDZ domain; it reads QQSSTDTNKG…SVTLLVSRIL (79 aa). Disordered stretches follow at residues 521-557 and 744-767; these read GNAAAPGEEVDNSSSAYNTGDSNNSASPHQNTTNPDE and KEERKRHIERAREKRHHQTQQQQQ. A compositionally biased stretch (polar residues) spans 532-555; that stretch reads NSSSAYNTGDSNNSASPHQNTTNP. The segment covering 744-755 has biased composition (basic and acidic residues); sequence KEERKRHIERAR.

In terms of assembly, interacts with Slo. In embryos, it is expressed throughout the CNS and in several peripheral locations. Colocalizes with Slo.

Functionally, may selectively reduce calcium-activated potassium channel (Slo) currents by reducing the number of Slo channels in the plasma membrane. The protein is Slo-interacting protein 1 (Slip1) of Drosophila melanogaster (Fruit fly).